A 37-amino-acid polypeptide reads, in one-letter code: U4-theraphotoxin-Hhn1v (37 aa).

3 cysteine pairs are disulfide-bonded: Cys3-Cys17, Cys7-Cys28, and Cys22-Cys33.

It belongs to the neurotoxin 12 (Hwtx-2) family. 02 (Hwtx-2) subfamily. As to expression, expressed by the venom gland.

The protein localises to the secreted. Its function is as follows. Postsynaptic neurotoxin. This Cyriopagopus hainanus (Chinese bird spider) protein is U4-theraphotoxin-Hhn1v.